The primary structure comprises 747 residues: Oxysterol-binding protein-related protein 11 (747 aa).

M1 bears the N-acetylmethionine mark. Residues 1–50 (MQGGEPVSTMKVSESEGKLEGQATAVTPNKNSSCGGGISSSSSSRGGSAK) are disordered. S15 carries the post-translational modification Phosphoserine. T27 is modified (phosphothreonine). Residues 58–155 (MENVYGYLMK…WVSRLQICTQ (98 aa)) enclose the PH domain. Position 62 is a phosphotyrosine (Y62). The tract at residues 158 to 188 (TEAIGKNNPPLKSRSFSLASSSNSPISQRRP) is disordered. Residues 170-184 (SRSFSLASSSNSPIS) are compositionally biased toward low complexity. S172, S174, S177, S181, S184, and S189 each carry phosphoserine. A compositionally biased stretch (basic and acidic residues) spans 689-713 (EIDKATEHKHTLEERQRTEERHRTE). The interval 689 to 714 (EIDKATEHKHTLEERQRTEERHRTET) is disordered.

The protein belongs to the OSBP family. In terms of assembly, heterodimer with OSBPL9. As to expression, present at highest levels in ovary, testis, kidney, liver, stomach, brain, and adipose tissue. Strong expression (at protein level) in epithelial cells of kidney tubules, testicular tubules, caecum, and skin. Present at low levels in subcutaneous and visceral adipose tissue (at protein level).

The protein localises to the late endosome membrane. It localises to the golgi apparatus. It is found in the trans-Golgi network membrane. It carries out the reaction a 1,2-diacyl-sn-glycero-3-phospho-(1D-myo-inositol 4-phosphate)(out) + a 1,2-diacyl-sn-glycero-3-phospho-L-serine(in) = a 1,2-diacyl-sn-glycero-3-phospho-(1D-myo-inositol 4-phosphate)(in) + a 1,2-diacyl-sn-glycero-3-phospho-L-serine(out). Functionally, plays a role in regulating ADIPOQ and FABP4 levels in differentiating adipocytes and is also involved in regulation of adipocyte triglyceride storage. Weakly binds 25-hydroxycholesterol. Interacts with OSBPL9 to function as lipid transfer proteins. Together they form a heterodimer that localizes at the ER-trans-Golgi membrane contact sites, and exchanges phosphatidylserine (1,2-diacyl-sn-glycero-3-phospho-L-serine, PS) for phosphatidylinositol-4-phosphate (1,2-diacyl-sn-glycero-3-phospho-(1D-myo-inositol 4-phosphate), PI(4)P) between the two organelles, a step that is critical for sphingomyelin synthesis in the Golgi complex. In Homo sapiens (Human), this protein is Oxysterol-binding protein-related protein 11 (OSBPL11).